Consider the following 380-residue polypeptide: Forkhead box protein F1 (380 aa).

Positions methionine 1 to methionine 19 are enriched in polar residues. Residues methionine 1–arginine 49 are disordered. A DNA-binding region (fork-head) is located at residues lysine 52–arginine 146.

It is found in the nucleus. This is Forkhead box protein F1 (foxf1) from Danio rerio (Zebrafish).